Consider the following 1114-residue polypeptide: WD repeat-containing protein 72 (1114 aa).

WD repeat units follow at residues 15 to 54 (APPHSITAIMITDDQQTIVTGSQEGQLCLWSLSPELKISA), 60 to 102 (GHSA…CVEK), 160 to 197 (KCMCIVHSVRIQEDSLLVVSITGELKVWDLSSSINSIQ), 327 to 373 (EENK…SKFD), 413 to 452 (GMTATITSSEYIPNLDKLICGCEDGTIFITKALNAAKAGL), 470 to 515 (GHHQ…ILHT), and 566 to 605 (KHLFPVRMIRWHPVENFLIVGCTDDSVYIWEIETGTLERH). Disordered regions lie at residues 634 to 658 (SETHKHKSIEQKSSNSHQPGPVPCP) and 749 to 798 (SLQT…PPRK). Positions 780-796 (KRQKKMKSSKKAHPKPP) are enriched in basic residues. A phosphoserine mark is found at S1093 and S1095.

In terms of tissue distribution, expressed in maturation stage ameloblasts (at protein level).

The protein resides in the cytoplasmic vesicle. Functionally, plays a major role in formation of tooth enamel. Specifically required during the maturation phase of amelogenesis for normal formation of the enamel matrix and clearance of enamel proteins. May be involved in localization of the calcium transporter SLC24A4 to the ameloblast cell membrane. In Mus musculus (Mouse), this protein is WD repeat-containing protein 72.